A 583-amino-acid polypeptide reads, in one-letter code: Probable lysosomal cobalamin transporter (583 aa).

The next 10 helical transmembrane spans lie at 8–28 (LIWA…SVFI), 41–61 (VILT…LVPV), 95–115 (IVYY…IPFI), 145–165 (TVSF…VPVA), 188–208 (ALTF…VLYT), 312–332 (LLSG…MLLT), 347–367 (GYIL…VQSA), 375–395 (VIFT…ISAV), 418–438 (LLAT…TSMI), and 506–526 (FFGA…LLVM). A compositionally biased stretch (acidic residues) spans 541-552 (LDEDAEEAEEES). The interval 541–562 (LDEDAEEAEEESLLANTRGRAE) is disordered.

Belongs to the LIMR family. LMBRD1 subfamily.

It localises to the lysosome membrane. In terms of biological role, probable lysosomal cobalamin transporter. Required to export cobalamin from lysosomes allowing its conversion to cofactors. This is Probable lysosomal cobalamin transporter from Aspergillus oryzae (strain ATCC 42149 / RIB 40) (Yellow koji mold).